The following is a 252-amino-acid chain: Redox-sensing transcriptional repressor Rex (252 aa).

The segment at residues 26-65 (LYLRALTALSERSVPTVSSEELAAAAGVNSAKLRKDFSYL) is a DNA-binding region (H-T-H motif). NAD(+) is bound at residue 100-105 (GIGNLG). A disordered region spans residues 222 to 252 (EAAAEGAIPAAASKESADKGPDGDVPAVMPA).

Belongs to the transcriptional regulatory Rex family. As to quaternary structure, homodimer.

Its subcellular location is the cytoplasm. Its function is as follows. Modulates transcription in response to changes in cellular NADH/NAD(+) redox state. This Streptomyces avermitilis (strain ATCC 31267 / DSM 46492 / JCM 5070 / NBRC 14893 / NCIMB 12804 / NRRL 8165 / MA-4680) protein is Redox-sensing transcriptional repressor Rex.